A 321-amino-acid polypeptide reads, in one-letter code: Hydrolase 3 (321 aa).

The Involved in the stabilization of the negatively charged intermediate by the formation of the oxyanion hole signature appears at 80–82 (HGA). Catalysis depends on residues serine 172 and aspartate 267.

This sequence belongs to the 'GDXG' lipolytic enzyme family.

It catalyses the reaction dihydroprecondylocarpine acetate + NADPH = (+)-vincadifformine + acetate + NADP(+). It functions in the pathway alkaloid biosynthesis. Its function is as follows. Component of the seco-iridoid and derivatives monoterpenoid indole alkaloids (MIAs, e.g. vincadifformine) biosynthesis pathway. Catalyzes the conversion of O-acetylstemmadenine (OAS) to vincadifformine. May also trigger the formation of additional unknown MIAs. This is Hydrolase 3 from Catharanthus roseus (Madagascar periwinkle).